The primary structure comprises 896 residues: Alanine--tRNA ligase (896 aa).

The span at 439-456 (QRAKDDAKAKKGQHRDAS) shows a compositional bias: basic and acidic residues. Positions 439–459 (QRAKDDAKAKKGQHRDASAYR) are disordered. His-579, His-583, Cys-681, and His-685 together coordinate Zn(2+).

The protein belongs to the class-II aminoacyl-tRNA synthetase family. Zn(2+) serves as cofactor.

The protein resides in the cytoplasm. It carries out the reaction tRNA(Ala) + L-alanine + ATP = L-alanyl-tRNA(Ala) + AMP + diphosphate. Functionally, catalyzes the attachment of alanine to tRNA(Ala) in a two-step reaction: alanine is first activated by ATP to form Ala-AMP and then transferred to the acceptor end of tRNA(Ala). Also edits incorrectly charged Ser-tRNA(Ala) and Gly-tRNA(Ala) via its editing domain. This chain is Alanine--tRNA ligase, found in Nocardioides sp. (strain ATCC BAA-499 / JS614).